A 629-amino-acid chain; its full sequence is tRNA uridine 5-carboxymethylaminomethyl modification enzyme MnmG (629 aa).

FAD-binding positions include 13 to 18 (GGGHAG), V125, and S180. Residue 273 to 287 (GPRYCPSIEDKVMRF) participates in NAD(+) binding. FAD is bound at residue Q370.

The protein belongs to the MnmG family. Homodimer. Heterotetramer of two MnmE and two MnmG subunits. The cofactor is FAD.

The protein localises to the cytoplasm. NAD-binding protein involved in the addition of a carboxymethylaminomethyl (cmnm) group at the wobble position (U34) of certain tRNAs, forming tRNA-cmnm(5)s(2)U34. This Salmonella choleraesuis (strain SC-B67) protein is tRNA uridine 5-carboxymethylaminomethyl modification enzyme MnmG.